Consider the following 23-residue polypeptide: Potassium channel toxin alpha-KTx 13.3 (23 aa).

3 disulfides stabilise this stretch: Cys-2–Cys-15, Cys-5–Cys-20, and Cys-9–Cys-22. The interaction with Ca(2+)-activated K(+) channels stretch occupies residues 13–20 (GKCINGRC). At Tyr-23 the chain carries Tyrosine amide.

In terms of tissue distribution, expressed by the venom gland.

Its subcellular location is the secreted. Functionally, reversibly blocks Shaker B potassium channels, with a dissociation constant of 200 nM. The polypeptide is Potassium channel toxin alpha-KTx 13.3 (Tityus pachyurus (Colombian scorpion)).